We begin with the raw amino-acid sequence, 122 residues long: Large ribosomal subunit protein uL14 (122 aa).

Belongs to the universal ribosomal protein uL14 family. Part of the 50S ribosomal subunit. Forms a cluster with proteins L3 and L19. In the 70S ribosome, L14 and L19 interact and together make contacts with the 16S rRNA in bridges B5 and B8.

Its function is as follows. Binds to 23S rRNA. Forms part of two intersubunit bridges in the 70S ribosome. The sequence is that of Large ribosomal subunit protein uL14 from Methylorubrum populi (strain ATCC BAA-705 / NCIMB 13946 / BJ001) (Methylobacterium populi).